Reading from the N-terminus, the 83-residue chain is RNA-binding protein Hfq (83 aa).

The 60-residue stretch at 10-69 folds into the Sm domain; it reads DPFLNALRREHVPVSIYLVNGIKLQGQIESFDQYVVLLRNTVTQMVYKHAISTIVPGRAV.

It belongs to the Hfq family. As to quaternary structure, homohexamer.

Its function is as follows. RNA chaperone that binds small regulatory RNA (sRNAs) and mRNAs to facilitate mRNA translational regulation in response to envelope stress, environmental stress and changes in metabolite concentrations. Also binds with high specificity to tRNAs. The chain is RNA-binding protein Hfq from Acidovorax ebreus (strain TPSY) (Diaphorobacter sp. (strain TPSY)).